The sequence spans 557 residues: Potassium-transporting ATPase potassium-binding subunit (557 aa).

Transmembrane regions (helical) follow at residues 5-25, 63-83, 132-152, 170-190, 253-273, 283-303, 329-349, 356-376, 379-399, 416-436, 484-504, and 526-546; these read GFLL…PLGS, LCAI…MLLG, GLTV…FALI, LLRI…LFFI, FVQM…FGEV, LLWA…WAEV, VLVS…AVIA, ALGG…FGGV, GLYG…LMIG, LTAL…ALAM, LLAF…MAIA, and LFVG…FIPA.

The protein belongs to the KdpA family. The system is composed of three essential subunits: KdpA, KdpB and KdpC.

It localises to the cell inner membrane. Part of the high-affinity ATP-driven potassium transport (or Kdp) system, which catalyzes the hydrolysis of ATP coupled with the electrogenic transport of potassium into the cytoplasm. This subunit binds the periplasmic potassium ions and delivers the ions to the membrane domain of KdpB through an intramembrane tunnel. The chain is Potassium-transporting ATPase potassium-binding subunit from Escherichia coli (strain K12 / MC4100 / BW2952).